A 241-amino-acid polypeptide reads, in one-letter code: Ribosomal RNA small subunit methyltransferase G (241 aa).

Residues glycine 79, phenylalanine 84, 130–131 (AE), and arginine 150 contribute to the S-adenosyl-L-methionine site.

Belongs to the methyltransferase superfamily. RNA methyltransferase RsmG family.

Its subcellular location is the cytoplasm. In terms of biological role, specifically methylates the N7 position of a guanine in 16S rRNA. The protein is Ribosomal RNA small subunit methyltransferase G of Ligilactobacillus salivarius (strain UCC118) (Lactobacillus salivarius).